Reading from the N-terminus, the 489-residue chain is Glutamate--tRNA ligase (489 aa).

The short motif at 12–22 (PSPTGIPHVGM) is the 'HIGH' region element. The short motif at 256–260 (KLSKR) is the 'KMSKS' region element. Lys259 lines the ATP pocket.

Belongs to the class-I aminoacyl-tRNA synthetase family. Glutamate--tRNA ligase type 1 subfamily. As to quaternary structure, monomer.

It is found in the cytoplasm. The enzyme catalyses tRNA(Glu) + L-glutamate + ATP = L-glutamyl-tRNA(Glu) + AMP + diphosphate. Its function is as follows. Catalyzes the attachment of glutamate to tRNA(Glu) in a two-step reaction: glutamate is first activated by ATP to form Glu-AMP and then transferred to the acceptor end of tRNA(Glu). The protein is Glutamate--tRNA ligase of Mycobacterium marinum (strain ATCC BAA-535 / M).